The following is a 625-amino-acid chain: Probable thymidylate synthase (625 aa).

The tract at residues 224 to 323 (AVKNIDGQDD…PEPPVPFTSS (100 aa)) is disordered. Acidic residues predominate over residues 243–257 (EEYDDDDDDDVDDNE). 2 stretches are compositionally biased toward polar residues: residues 258–269 (QSNSMIETSANA) and 293–312 (SQAP…NVTT). Residues arginine 350 and 477–478 (RR) contribute to the dUMP site. The active-site Nucleophile is cysteine 497. Residues 524–527 (RSAD), asparagine 535, and 565–567 (HIY) each bind dUMP. Aspartate 527 provides a ligand contact to (6R)-5,10-methylene-5,6,7,8-tetrahydrofolate.

In the N-terminal section; belongs to the HFCD (homo-oligomeric flavin containing Cys decarboxylase) superfamily. The protein in the C-terminal section; belongs to the thymidylate synthase family.

It localises to the cytoplasm. It carries out the reaction dUMP + (6R)-5,10-methylene-5,6,7,8-tetrahydrofolate = 7,8-dihydrofolate + dTMP. It participates in pyrimidine metabolism; dTTP biosynthesis. In terms of biological role, required for both nuclear and mitochondrial DNA synthesis. The chain is Probable thymidylate synthase from Schizosaccharomyces pombe (strain 972 / ATCC 24843) (Fission yeast).